We begin with the raw amino-acid sequence, 130 residues long: Modulator protein MzrA (130 aa).

Over 1–15 (MIAAFIKRHAPQRRL) the chain is Cytoplasmic. The chain crosses the membrane as a helical span at residues 16-36 (SLWLALPVVALLALVMMPALF). Residues 37-130 (RHDSALQIRA…RISFKPQSIG (94 aa)) are Periplasmic-facing.

It belongs to the MzrA family. Interacts with EnvZ.

Its subcellular location is the cell inner membrane. Its function is as follows. Modulates the activity of the EnvZ/OmpR two-component regulatory system, probably by directly modulating EnvZ enzymatic activity and increasing stability of phosphorylated OmpR. This chain is Modulator protein MzrA, found in Erwinia tasmaniensis (strain DSM 17950 / CFBP 7177 / CIP 109463 / NCPPB 4357 / Et1/99).